Reading from the N-terminus, the 67-residue chain is Large ribosomal subunit protein bL31 (67 aa).

This sequence belongs to the bacterial ribosomal protein bL31 family. Type A subfamily. As to quaternary structure, part of the 50S ribosomal subunit.

Functionally, binds the 23S rRNA. This Leptospira borgpetersenii serovar Hardjo-bovis (strain JB197) protein is Large ribosomal subunit protein bL31.